Reading from the N-terminus, the 457-residue chain is UDP-glycosyltransferase 708C1 (457 aa).

Gly-31 lines the UDP-alpha-D-glucose pocket. His-32 (proton acceptor) is an active-site residue. His-32 is an an anthocyanidin binding site. Position 34 (Thr-34) interacts with UDP-alpha-D-glucose. Position 94 (Asn-94) interacts with an anthocyanidin. Asp-129 acts as the Charge relay in catalysis. Position 150 (Thr-150) interacts with UDP-alpha-D-glucose. Residues 279-280 form a UDP region; sequence NR. Val-341, Gln-343, His-358, Trp-361, Asn-362, Ser-363, and Glu-366 together coordinate UDP-alpha-D-glucose. Gly-381 serves as a coordination point for an anthocyanidin. Residues Asp-382 and Gln-383 each contribute to the UDP-alpha-D-glucose site.

It belongs to the UDP-glycosyltransferase family. Expressed in cotyledons. Not detected in flowers, leaves, roots and hypocotyls.

The enzyme catalyses a 3'-hydro-2'-hydroxy-beta-oxodihydrochalcone + UDP-alpha-D-glucose = a 3'-(beta-D-glucopyranosyl)-2'-hydroxy-beta-oxodihydrochalcone + UDP + H(+). Its function is as follows. UDP-glucose-dependent glucosyltransferase catalyzing the C-glucosylation of 2-hydroxyflavanones (2-hydroxynaringenin, 2-hydroxyeriodictyol and 2-hydroxypinocembrin) and phloretin. No activity with flavanones, flavones or flavonols. Exhibits C-glycosylation activity toward 2',4',6'-trihydroxyacetophenone and phloretin using UDP-glucose as sugar donor. Can use UDP-galactose as sugar donor, but catalytic efficiency is 14-fold lower toward UDP-galactose than toward UDP-glucose. The sequence is that of UDP-glycosyltransferase 708C1 from Fagopyrum esculentum (Common buckwheat).